The primary structure comprises 561 residues: 2-succinyl-5-enolpyruvyl-6-hydroxy-3-cyclohexene-1-carboxylate synthase (561 aa).

Belongs to the TPP enzyme family. MenD subfamily. As to quaternary structure, homodimer. Mg(2+) is required as a cofactor. Mn(2+) serves as cofactor. The cofactor is thiamine diphosphate.

The enzyme catalyses isochorismate + 2-oxoglutarate + H(+) = 5-enolpyruvoyl-6-hydroxy-2-succinyl-cyclohex-3-ene-1-carboxylate + CO2. It participates in quinol/quinone metabolism; 1,4-dihydroxy-2-naphthoate biosynthesis; 1,4-dihydroxy-2-naphthoate from chorismate: step 2/7. The protein operates within cofactor biosynthesis; phylloquinone biosynthesis. In terms of biological role, catalyzes the thiamine diphosphate-dependent decarboxylation of 2-oxoglutarate and the subsequent addition of the resulting succinic semialdehyde-thiamine pyrophosphate anion to isochorismate to yield 2-succinyl-5-enolpyruvyl-6-hydroxy-3-cyclohexene-1-carboxylate (SEPHCHC). The polypeptide is 2-succinyl-5-enolpyruvyl-6-hydroxy-3-cyclohexene-1-carboxylate synthase (Synechococcus sp. (strain CC9605)).